The sequence spans 946 residues: Rho GTPase-activating protein 4 (946 aa).

Positions 19–317 constitute an F-BAR domain; sequence TQVKEMRWQL…AVEALDPPGD (299 aa). Residues 128-195 are a coiled coil; sequence LAQRLSHIAE…REAERQEEKR (68 aa). The segment covering 187–196 has biased composition (basic and acidic residues); the sequence is EAERQEEKRA. Disordered regions lie at residues 187–220 and 402–435; these read EAERQEEKRAGRSVPTTTAGATEAGPLRKSSLKK and LDSFQTSPSTESLKSTSSDPGSRQAGRRRGQQQE. Low complexity-rich tracts occupy residues 202 to 211 and 407 to 419; these read TTTAGATEAG and TSPSTESLKSTSS. The Rho-GAP domain occupies 507–695; it reads GDMEKFIQSS…TLIVQPDRVF (189 aa). One can recognise an SH3 domain in the interval 746–805; the sequence is EGVVEAVACFAYTGRTAQELSFRRGDVLRLHERASSDWWRGEHNGMRGLIPHKYITLPAG. Phosphoserine is present on residues Ser860, Ser901, and Ser906. The tract at residues 885 to 946 is disordered; it reads KTSVRQGLGP…QGLDTTPKPH (62 aa). The span at 901–910 shows a compositional bias: pro residues; the sequence is SPGPRSPKAP. Residues 924 to 934 show a composition bias toward low complexity; sequence GPGAPASPSAS.

Interacts with NCKAP1L. In terms of tissue distribution, predominantly in hematopoietic cells (spleen, thymus and leukocytes); low levels in placenta, lung and various fetal tissues.

It localises to the cytoplasm. Functionally, inhibitory effect on stress fiber organization. May down-regulate Rho-like GTPase in hematopoietic cells. In Homo sapiens (Human), this protein is Rho GTPase-activating protein 4.